The following is a 110-amino-acid chain: Insulin-1 (110 aa).

An N-terminal signal peptide occupies residues 1–24 (MALWMRFLPLLALLVLWEPKPAQA). Cystine bridges form between cysteine 31/cysteine 96, cysteine 43/cysteine 109, and cysteine 95/cysteine 100. Positions 57 to 87 (EVEDPQVPQLELGGGPEAGDLQTLALEVARQ) are cleaved as a propeptide — c peptide.

The protein belongs to the insulin family. Heterodimer of a B chain and an A chain linked by two disulfide bonds.

The protein resides in the secreted. Insulin decreases blood glucose concentration. It increases cell permeability to monosaccharides, amino acids and fatty acids. It accelerates glycolysis, the pentose phosphate cycle, and glycogen synthesis in liver. In Rattus norvegicus (Rat), this protein is Insulin-1 (Ins1).